A 777-amino-acid polypeptide reads, in one-letter code: Mediator of RNA polymerase II transcription subunit 15 (777 aa).

Disordered regions lie at residues Met120–Thr139 and Ser418–Gln520. The segment covering Pro420–Pro434 has biased composition (low complexity). Over residues Gln435–Ser448 the composition is skewed to pro residues. The segment covering Gln449 to Pro471 has biased composition (low complexity). The span at Thr500–Gln519 shows a compositional bias: polar residues.

Belongs to the Mediator complex subunit 15 family. In terms of assembly, component of the Mediator complex. Interacts with srebf1 and srebf2. Interacts with smad2, smad3 and smad4.

It localises to the cytoplasm. Its subcellular location is the nucleus. In terms of biological role, component of the Mediator complex, a coactivator involved in the regulated transcription of nearly all RNA polymerase II-dependent genes. Mediator functions as a bridge to convey information from gene-specific regulatory proteins to the basal RNA polymerase II transcription machinery. Mediator is recruited to promoters by direct interactions with regulatory proteins and serves as a scaffold for the assembly of a functional preinitiation complex with RNA polymerase II and the general transcription factors. Required for cholesterol-dependent gene regulation. Positively regulates the Nodal signaling pathway. The protein is Mediator of RNA polymerase II transcription subunit 15 (med15) of Xenopus laevis (African clawed frog).